A 122-amino-acid chain; its full sequence is Large ribosomal subunit protein uL14 (122 aa).

The protein belongs to the universal ribosomal protein uL14 family. Part of the 50S ribosomal subunit. Forms a cluster with proteins L3 and L19. In the 70S ribosome, L14 and L19 interact and together make contacts with the 16S rRNA in bridges B5 and B8.

In terms of biological role, binds to 23S rRNA. Forms part of two intersubunit bridges in the 70S ribosome. This is Large ribosomal subunit protein uL14 from Xanthomonas oryzae pv. oryzae (strain MAFF 311018).